The chain runs to 132 residues: MQDFDFSFNPKACEGCGAKCCVGESGYIFLNIQEMQQISAFLKLELEEFSQKYVKKVGYKFSLLEKDAKELGLACVFLDLETKKCQIYSVRPKQCQTFPFWEGVKTFSKEQKEAFCQSCPGITQKTKETKVR.

It to M.jannaschii MJ0661.

This is an uncharacterized protein from Helicobacter pylori (strain ATCC 700392 / 26695) (Campylobacter pylori).